A 552-amino-acid polypeptide reads, in one-letter code: Membrane protein insertase YidC (552 aa).

Transmembrane regions (helical) follow at residues 7–24 (VLWVIFFMSAVMLYDNWQ), 364–384 (WGWAIVLLTVLIKAVFFPLSA), 434–454 (LPVVIQIPVFISLYWVLLASV), 473–493 (PFFILPVLMAVSMFVQTSLNP), and 508–528 (PIAFSVMFFFFPAGLVLYYVV).

It belongs to the OXA1/ALB3/YidC family. Type 1 subfamily. As to quaternary structure, interacts with the Sec translocase complex via SecD. Specifically interacts with transmembrane segments of nascent integral membrane proteins during membrane integration.

It localises to the cell inner membrane. Required for the insertion and/or proper folding and/or complex formation of integral membrane proteins into the membrane. Involved in integration of membrane proteins that insert both dependently and independently of the Sec translocase complex, as well as at least some lipoproteins. Aids folding of multispanning membrane proteins. In Burkholderia cenocepacia (strain ATCC BAA-245 / DSM 16553 / LMG 16656 / NCTC 13227 / J2315 / CF5610) (Burkholderia cepacia (strain J2315)), this protein is Membrane protein insertase YidC.